Reading from the N-terminus, the 315-residue chain is Glycine--tRNA ligase alpha subunit (315 aa).

Belongs to the class-II aminoacyl-tRNA synthetase family. Tetramer of two alpha and two beta subunits.

The protein resides in the cytoplasm. It catalyses the reaction tRNA(Gly) + glycine + ATP = glycyl-tRNA(Gly) + AMP + diphosphate. In Pseudomonas syringae pv. tomato (strain ATCC BAA-871 / DC3000), this protein is Glycine--tRNA ligase alpha subunit.